A 1226-amino-acid polypeptide reads, in one-letter code: Methionine synthase (1226 aa).

Residues 6 to 326 form the Hcy-binding domain; the sequence is RAQIEAQLKQ…EHIRHMAMAV (321 aa). The Zn(2+) site is built by cysteine 248, cysteine 311, and cysteine 312. One can recognise a Pterin-binding domain in the interval 357-618; the sequence is FVNVGERTNV…VPEKLREAVE (262 aa). The 95-residue stretch at 651-745 folds into the B12-binding N-terminal domain; sequence SALEWRTWSV…FINASKQAGS (95 aa). Residues glutamate 695, 757–761, histidine 760, serine 805, threonine 809, and alanine 861 contribute to the methylcob(III)alamin site; that span reads GDVHD. A B12-binding domain is found at 747–882; sequence NGKILLATVK…SDELRPAFVE (136 aa). The AdoMet activation domain occupies 898-1226; sequence KKPRTKPVTL…EKWLGPNING (329 aa). Residues aspartate 948, arginine 1136, and 1191-1192 each bind S-adenosyl-L-methionine; that span reads YF.

It belongs to the vitamin-B12 dependent methionine synthase family. Methylcob(III)alamin serves as cofactor. It depends on Zn(2+) as a cofactor.

The enzyme catalyses (6S)-5-methyl-5,6,7,8-tetrahydrofolate + L-homocysteine = (6S)-5,6,7,8-tetrahydrofolate + L-methionine. It participates in amino-acid biosynthesis; L-methionine biosynthesis via de novo pathway; L-methionine from L-homocysteine (MetH route): step 1/1. In terms of biological role, catalyzes the transfer of a methyl group from methyl-cobalamin to homocysteine, yielding enzyme-bound cob(I)alamin and methionine. Subsequently, remethylates the cofactor using methyltetrahydrofolate. This is Methionine synthase (metH) from Vibrio vulnificus (strain CMCP6).